The following is a 906-amino-acid chain: Protein translocase subunit SecA (906 aa).

ATP contacts are provided by residues Gln-87, 105–109 (GEGKT), and Asp-507. Zn(2+) is bound by residues Cys-890, Cys-892, Cys-901, and His-902.

This sequence belongs to the SecA family. In terms of assembly, monomer and homodimer. Part of the essential Sec protein translocation apparatus which comprises SecA, SecYEG and auxiliary proteins SecDF-YajC and YidC. Zn(2+) serves as cofactor.

Its subcellular location is the cell inner membrane. It is found in the cytoplasm. The enzyme catalyses ATP + H2O + cellular proteinSide 1 = ADP + phosphate + cellular proteinSide 2.. Part of the Sec protein translocase complex. Interacts with the SecYEG preprotein conducting channel. Has a central role in coupling the hydrolysis of ATP to the transfer of proteins into and across the cell membrane, serving both as a receptor for the preprotein-SecB complex and as an ATP-driven molecular motor driving the stepwise translocation of polypeptide chains across the membrane. The polypeptide is Protein translocase subunit SecA (Laribacter hongkongensis (strain HLHK9)).